A 279-amino-acid chain; its full sequence is Bis(5'-nucleosyl)-tetraphosphatase, symmetrical (279 aa).

This sequence belongs to the Ap4A hydrolase family.

It catalyses the reaction P(1),P(4)-bis(5'-adenosyl) tetraphosphate + H2O = 2 ADP + 2 H(+). Functionally, hydrolyzes diadenosine 5',5'''-P1,P4-tetraphosphate to yield ADP. This is Bis(5'-nucleosyl)-tetraphosphatase, symmetrical from Edwardsiella ictaluri (strain 93-146).